Reading from the N-terminus, the 552-residue chain is L-ascorbate oxidase (552 aa).

Plastocyanin-like domains follow at residues 1-122 and 134-300; these read SQIR…LIVD and DGEI…NYLP. Intrachain disulfides connect cysteine 19–cysteine 201, cysteine 81–cysteine 538, and cysteine 180–cysteine 193. Cu cation is bound by residues histidine 60 and histidine 62. A glycan (N-linked (GlcNAc...) asparagine) is linked at asparagine 92. Positions 104 and 106 each coordinate Cu cation. 2 N-linked (GlcNAc...) asparagine glycosylation sites follow: asparagine 325 and asparagine 440. A Plastocyanin-like 3 domain is found at 344 to 523; it reads NRRIFLLNTQ…HMGMGVVFAE (180 aa). Residues histidine 445, histidine 448, histidine 450, histidine 506, cysteine 507, histidine 508, histidine 512, and methionine 517 each contribute to the Cu cation site.

The protein belongs to the multicopper oxidase family. In terms of assembly, dimer. Cu cation serves as cofactor.

The protein resides in the secreted. It carries out the reaction 4 L-ascorbate + O2 = 4 monodehydro-L-ascorbate radical + 2 H2O. Its function is as follows. May be involved in a redox system involving ascorbic acid. This is L-ascorbate oxidase from Cucurbita pepo var. melopepo (Zucchini).